Reading from the N-terminus, the 137-residue chain is Protein MGF 110-7L (137 aa).

A signal peptide spans 1–20 (MLVIILGIIGLLASSNLVSS). 3 N-linked (GlcNAc...) asparagine; by host glycosylation sites follow: Asn-69, Asn-70, and Asn-105.

It belongs to the asfivirus MGF 110 family.

In terms of biological role, plays a role in virus cell tropism, and may be required for efficient virus replication in macrophages. This African swine fever virus (isolate Tick/South Africa/Pretoriuskop Pr4/1996) (ASFV) protein is Protein MGF 110-7L.